The sequence spans 327 residues: MDLYPEENTQSEQSQNSENNMQIFKSENSDGFSSDLMISNDQLKNISKTQLTLEKEKIFKMPNVLSQVMKRAFSRKNEILYCVSTKELSVDIHDATGKVYLPLITREEINKRLSSLKPEVRKTMSMVHLGAVKILLKAQFRNGIDTPIKIALIDDRINSRRDCLLGAAKGNLAYGKFMFTVYPKFGISLNTQRLNQTLSLIHDFENKNLMNKGDKVMTITYMVGYALTNSHHSIDYQSNATIELEDVFQEIGNVHESDFCTIQNDECNWAIDIAQNKALLGAKTKSQIGNNLQIGNSASSSNTENELARVSQNIDLLKNKLKEICGE.

The stretch at 297-327 (SASSSNTENELARVSQNIDLLKNKLKEICGE) forms a coiled coil.

Belongs to the caulimoviridae movement protein family. In terms of assembly, homotrimer, through the coiled-coil domain. Interacts with VAP. May interact (via N-terminus) with host prenylated Rab acceptor protein 1D (PRA1D).

Its subcellular location is the host cell junction. It localises to the host plasmodesma. Functionally, transports viral genome to neighboring plant cells directly through plasmosdesmata, without any budding. The movement protein allows efficient cell to cell propagation, by bypassing the host cell wall barrier. Acts by forming tubules structures that increase the size exclusion limit (SEL) of plasmodesmata, thereby allowing viral ribonucleocapsids to spread directly to neighboring cells. The chain is Movement protein from Arabidopsis thaliana (Mouse-ear cress).